The following is a 42-amino-acid chain: Photosystem II reaction center protein J (42 aa).

The helical transmembrane segment at 10–30 (IPLWFIGVIAGIAALSIVGLF) threads the bilayer.

It belongs to the PsbJ family. As to quaternary structure, PSII is composed of 1 copy each of membrane proteins PsbA, PsbB, PsbC, PsbD, PsbE, PsbF, PsbH, PsbI, PsbJ, PsbK, PsbL, PsbM, PsbT, PsbX, PsbY, PsbZ, Psb30/Ycf12, at least 3 peripheral proteins of the oxygen-evolving complex and a large number of cofactors. It forms dimeric complexes.

The protein localises to the plastid. The protein resides in the chloroplast thylakoid membrane. Functionally, one of the components of the core complex of photosystem II (PSII). PSII is a light-driven water:plastoquinone oxidoreductase that uses light energy to abstract electrons from H(2)O, generating O(2) and a proton gradient subsequently used for ATP formation. It consists of a core antenna complex that captures photons, and an electron transfer chain that converts photonic excitation into a charge separation. The chain is Photosystem II reaction center protein J from Zygnema circumcarinatum (Green alga).